Consider the following 155-residue polypeptide: 6,7-dimethyl-8-ribityllumazine synthase (155 aa).

Residues F24, 58-60, and 82-84 contribute to the 5-amino-6-(D-ribitylamino)uracil site; these read AFE and VLI. Residue 87-88 participates in (2S)-2-hydroxy-3-oxobutyl phosphate binding; sequence AT. Catalysis depends on H90, which acts as the Proton donor. 5-amino-6-(D-ribitylamino)uracil is bound at residue F115. R129 provides a ligand contact to (2S)-2-hydroxy-3-oxobutyl phosphate.

It belongs to the DMRL synthase family.

The catalysed reaction is (2S)-2-hydroxy-3-oxobutyl phosphate + 5-amino-6-(D-ribitylamino)uracil = 6,7-dimethyl-8-(1-D-ribityl)lumazine + phosphate + 2 H2O + H(+). It participates in cofactor biosynthesis; riboflavin biosynthesis; riboflavin from 2-hydroxy-3-oxobutyl phosphate and 5-amino-6-(D-ribitylamino)uracil: step 1/2. Functionally, catalyzes the formation of 6,7-dimethyl-8-ribityllumazine by condensation of 5-amino-6-(D-ribitylamino)uracil with 3,4-dihydroxy-2-butanone 4-phosphate. This is the penultimate step in the biosynthesis of riboflavin. The polypeptide is 6,7-dimethyl-8-ribityllumazine synthase (Chloroherpeton thalassium (strain ATCC 35110 / GB-78)).